We begin with the raw amino-acid sequence, 256 residues long: Small ribosomal subunit protein eS1 (256 aa).

Positions 1–18 (MAVGKNKRLSKGKKGVKK) are enriched in basic residues. The segment at 1–20 (MAVGKNKRLSKGKKGVKKRT) is disordered. Ala2 bears the N-acetylalanine; partial mark.

The protein belongs to the eukaryotic ribosomal protein eS1 family. In terms of assembly, component of the small ribosomal subunit. Mature ribosomes consist of a small (40S) and a large (60S) subunit. The 40S subunit contains about 33 different proteins and 1 molecule of RNA (18S). The 60S subunit contains about 49 different proteins and 3 molecules of RNA (25S, 5.8S and 5S).

Its subcellular location is the cytoplasm. This is Small ribosomal subunit protein eS1 (rps1) from Aspergillus clavatus (strain ATCC 1007 / CBS 513.65 / DSM 816 / NCTC 3887 / NRRL 1 / QM 1276 / 107).